Here is a 305-residue protein sequence, read N- to C-terminus: Sulfate adenylyltransferase subunit 2 (305 aa).

Belongs to the PAPS reductase family. CysD subfamily. Heterodimer composed of CysD, the smaller subunit, and CysN.

The catalysed reaction is sulfate + ATP + H(+) = adenosine 5'-phosphosulfate + diphosphate. Its pathway is sulfur metabolism; hydrogen sulfide biosynthesis; sulfite from sulfate: step 1/3. With CysN forms the ATP sulfurylase (ATPS) that catalyzes the adenylation of sulfate producing adenosine 5'-phosphosulfate (APS) and diphosphate, the first enzymatic step in sulfur assimilation pathway. APS synthesis involves the formation of a high-energy phosphoric-sulfuric acid anhydride bond driven by GTP hydrolysis by CysN coupled to ATP hydrolysis by CysD. The protein is Sulfate adenylyltransferase subunit 2 of Pseudomonas fluorescens (strain SBW25).